We begin with the raw amino-acid sequence, 249 residues long: DNA repair protein RecO (249 aa).

Belongs to the RecO family.

Functionally, involved in DNA repair and RecF pathway recombination. This chain is DNA repair protein RecO, found in Polaromonas sp. (strain JS666 / ATCC BAA-500).